The sequence spans 73 residues: Large ribosomal subunit protein bL31 (73 aa).

This sequence belongs to the bacterial ribosomal protein bL31 family. Type A subfamily. As to quaternary structure, part of the 50S ribosomal subunit.

Binds the 23S rRNA. The polypeptide is Large ribosomal subunit protein bL31 (rpmE) (Ruegeria pomeroyi (strain ATCC 700808 / DSM 15171 / DSS-3) (Silicibacter pomeroyi)).